Reading from the N-terminus, the 892-residue chain is Translation initiation factor IF-2 (892 aa).

The interval 88–306 (KKRTFVKRDP…LQQGFQKPAQ (219 aa)) is disordered. Basic and acidic residues-rich tracts occupy residues 93 to 159 (VKRD…KDKV) and 166 to 216 (DMIK…EENK). Residues 254–269 (GRGRNAKAARPAKKGK) are compositionally biased toward basic residues. The span at 270–282 (HAESKADREEARA) shows a compositional bias: basic and acidic residues. Residues 391 to 560 (PRAPVVTIMG…LLQAEVLELK (170 aa)) form the tr-type G domain. Residues 400–407 (GHVDHGKT) are G1. GTP is bound at residue 400–407 (GHVDHGKT). The segment at 425–429 (GITQH) is G2. The interval 446–449 (DTPG) is G3. GTP contacts are provided by residues 446–450 (DTPGH) and 500–503 (NKID). The segment at 500–503 (NKID) is G4. Residues 536–538 (SAK) are G5.

This sequence belongs to the TRAFAC class translation factor GTPase superfamily. Classic translation factor GTPase family. IF-2 subfamily.

It is found in the cytoplasm. Its function is as follows. One of the essential components for the initiation of protein synthesis. Protects formylmethionyl-tRNA from spontaneous hydrolysis and promotes its binding to the 30S ribosomal subunits. Also involved in the hydrolysis of GTP during the formation of the 70S ribosomal complex. This chain is Translation initiation factor IF-2, found in Salmonella schwarzengrund (strain CVM19633).